The chain runs to 466 residues: FAD-dependent monooxygenase dpfgE (466 aa).

The first 23 residues, 1-23 (MSQKPFRVIIVGGSVTGLTLAHS), serve as a signal peptide directing secretion. Glu-35, Gly-49, and Arg-108 together coordinate FAD. N-linked (GlcNAc...) asparagine glycans are attached at residues Asn-128 and Asn-192. The FAD site is built by Asp-312 and Ala-325. Asn-376 carries an N-linked (GlcNAc...) asparagine glycan. The helical transmembrane segment at 443–465 (GVVRNVFFLLAATVIVAWVCRLW) threads the bilayer.

Belongs to the paxM FAD-dependent monooxygenase family. It depends on FAD as a cofactor.

The protein localises to the membrane. It participates in secondary metabolite biosynthesis; terpenoid biosynthesis. Functionally, FAD-dependent monooxygenase; part of the gene cluster that mediates the biosynthesis of diterpenoid pyrones. The first step of the pathway is the synthesis of the alpha-pyrone moiety by the polyketide synthase dpfgA via condensation of one acetyl-CoA starter unit with 3 malonyl-CoA units and 2 methylations. The alpha-pyrone is then combined with geranylgeranyl pyrophosphate (GGPP) formed by the GGPP synthase dpfgD through the action of the prenyltransferase dpfgC to yield a linear alpha-pyrone diterpenoid. Subsequent steps in the diterpenoid pyrone biosynthetic pathway involve the decalin core formation, which is initiated by the epoxidation of the C10-C11 olefin by the FAD-dependent oxidoreductase dpfgE, and is followed by a cyclization cascade catalyzed by the terpene cyclase dpfgB. The short chain dehydrogenase/reductase dpfgG then oxidizes the 8S hydroxy group to a ketone and the short chain dehydrogenase/reductase dpfgH reduces the ketone to the 8R hydroxy group to yield higginsianin B. Higginsianin B is further methylated by the methyltransferase dpfgI to produce the intermediate named FDDP B. The cytochrome P450 monooxygenase dfgpJ then catalyzes a three-step oxidation at C-27 to generate a carboxylic acid as well as C-26 hydroxylation. Finally, methyltransferase dpfgK methylates the carboxylic acid generated by dpfgJ, yielding the final diterpenoid pyrones from the pathway which were named FDDP D and FDDP E. The protein is FAD-dependent monooxygenase dpfgE of Gibberella zeae (strain ATCC MYA-4620 / CBS 123657 / FGSC 9075 / NRRL 31084 / PH-1) (Wheat head blight fungus).